A 416-amino-acid chain; its full sequence is MKAVGVVVEYNPFHNGHLHHLTEARKQAKADVVIAVMSGYFLQRGEPAILPKWERTSLALQGGADLVVELPYAFSTQKAEWFATGAVSILAALEADALCFGSEEGTIEPFHRLYHFMAKHRLAWDRMIKEELDKGMSYPTATSLAFKRLEGSAEHLDLSRPNNILGFHYVKAIYDLHTSIKAMTIPRIKAGYHDDSLNESSIASATSIRKSLKTKEGWQMVDRVVPSYTTEMLKSFEKETTFLPSWERLFPLLKYRLLTATPEQLHAIYEGEEGLEYRALKTIVSATSFHDWMTKMKTKRYTWTRIQRYATHLFTNTTKEEIHSVLPRGTESLPYIRLLGMTSRGQMYLNGKKKQLTTPVITRPAKVDDRMMNLDLRAAFSYYASFPPSLQQKRLKEEFHRTPIRIDHKPEPKKEA.

Residues 7 to 20 (VVEYNPFHNGHLHH), glycine 101, asparagine 162, and 187 to 188 (RI) each bind ATP.

It belongs to the TmcAL family.

The protein localises to the cytoplasm. The catalysed reaction is cytidine(34) in elongator tRNA(Met) + acetate + ATP = N(4)-acetylcytidine(34) in elongator tRNA(Met) + AMP + diphosphate. In terms of biological role, catalyzes the formation of N(4)-acetylcytidine (ac(4)C) at the wobble position of elongator tRNA(Met), using acetate and ATP as substrates. First activates an acetate ion to form acetyladenylate (Ac-AMP) and then transfers the acetyl group to tRNA to form ac(4)C34. The chain is tRNA(Met) cytidine acetate ligase from Halalkalibacterium halodurans (strain ATCC BAA-125 / DSM 18197 / FERM 7344 / JCM 9153 / C-125) (Bacillus halodurans).